The primary structure comprises 493 residues: Cholesteryl ester transfer protein (493 aa).

The N-terminal stretch at 1 to 17 (MLAATVLTLALLGNVHA) is a signal peptide. 2 N-linked (GlcNAc...) asparagine glycosylation sites follow: asparagine 59 and asparagine 105. Residues cysteine 160 and cysteine 201 are joined by a disulfide bond. Asparagine 257, asparagine 358, and asparagine 413 each carry an N-linked (GlcNAc...) asparagine glycan.

It belongs to the BPI/LBP/Plunc superfamily. BPI/LBP family. Probably primarily expressed in liver and adipose tissues. Detected in adrenal gland, mesenteric fat, spleen and aorta.

Its subcellular location is the secreted. It catalyses the reaction cholesteryl (9Z-octadecenoate)(in) = cholesteryl (9Z-octadecenoate)(out). The catalysed reaction is 1,2,3-tri-(9Z-octadecenoyl)-glycerol(in) = 1,2,3-tri-(9Z-octadecenoyl)-glycerol(out). The enzyme catalyses cholesteryl (9Z,12Z)-octadecadienoate(in) = cholesteryl (9Z,12Z)-octadecadienoate(out). Its function is as follows. Involved in the transfer of neutral lipids, including cholesteryl ester and triglyceride, among lipoprotein particles. Allows the net movement of cholesteryl ester from high density lipoproteins/HDL to triglyceride-rich very low density lipoproteins/VLDL, and the equimolar transport of triglyceride from VLDL to HDL. Regulates the reverse cholesterol transport, by which excess cholesterol is removed from peripheral tissues and returned to the liver for elimination. The chain is Cholesteryl ester transfer protein from Macaca fascicularis (Crab-eating macaque).